The chain runs to 319 residues: Protein-methionine-sulfoxide reductase catalytic subunit MsrP (319 aa).

A signal peptide (tat-type signal) is located at residues 1-54 (MSSFKPSRFSTARLTGDAVTPKSIYLRRREFMIGLGAIAATGAASSAFADPLEA). Mo-molybdopterin is bound by residues Asn75, 78–79 (YE), Cys133, Asn218, Arg223, and 234–236 (GIK).

It belongs to the MsrP family. As to quaternary structure, heterodimer of a catalytic subunit (MsrP) and a heme-binding subunit (MsrQ). Mo-molybdopterin is required as a cofactor. Predicted to be exported by the Tat system. The position of the signal peptide cleavage has not been experimentally proven.

Its subcellular location is the periplasm. It carries out the reaction L-methionyl-[protein] + a quinone + H2O = L-methionyl-(S)-S-oxide-[protein] + a quinol. The catalysed reaction is L-methionyl-[protein] + a quinone + H2O = L-methionyl-(R)-S-oxide-[protein] + a quinol. Its function is as follows. Part of the MsrPQ system that repairs oxidized periplasmic proteins containing methionine sulfoxide residues (Met-O), using respiratory chain electrons. Thus protects these proteins from oxidative-stress damage caused by reactive species of oxygen and chlorine generated by the host defense mechanisms. MsrPQ is essential for the maintenance of envelope integrity under bleach stress, rescuing a wide series of structurally unrelated periplasmic proteins from methionine oxidation. The catalytic subunit MsrP is non-stereospecific, being able to reduce both (R-) and (S-) diastereoisomers of methionine sulfoxide. The sequence is that of Protein-methionine-sulfoxide reductase catalytic subunit MsrP from Brucella melitensis biotype 1 (strain ATCC 23456 / CCUG 17765 / NCTC 10094 / 16M).